The following is a 408-amino-acid chain: Serine/threonine transporter SstT (408 aa).

The next 9 membrane-spanning stretches (helical) occupy residues 11-31 (LANGSLVLQILVGIIAGVSLA), 43-63 (FLGSLFVGALKAIAPILVFIL), 82-102 (IVVLYLFGTFAAALTAVVLSM), 141-161 (ALMTGNYIGILAWGVGLGLAL), 192-212 (IGIFGLVAATFAETGFAAIAG), 216-236 (LLAVLLGAMAIIALIVNPLIV), 290-310 (IPLGATINMGGAAITITVLTL), 316-336 (LGIQVDLLTALLLSVVAAISA), and 363-383 (VAMQVVAVGFIIGVIQDAAET).

The protein belongs to the dicarboxylate/amino acid:cation symporter (DAACS) (TC 2.A.23) family.

Its subcellular location is the cell inner membrane. The enzyme catalyses L-serine(in) + Na(+)(in) = L-serine(out) + Na(+)(out). It carries out the reaction L-threonine(in) + Na(+)(in) = L-threonine(out) + Na(+)(out). Involved in the import of serine and threonine into the cell, with the concomitant import of sodium (symport system). The chain is Serine/threonine transporter SstT from Shewanella sp. (strain ANA-3).